Reading from the N-terminus, the 256-residue chain is MIINRSCLKEFAEKVHFLPSSLTKSDLLTDPFRLHQENELGIYYSPHNEFINRDASLVIAGITPGFSQMKTAYETAAESLLQGGTLEQMAVDTKIAAGFSGSMRHNLITMLDLCGLPQAFGIQSAAKLFGELRHMLHTTSVIKYPVFIQQKNYTGYKPAITHSPILSTYAFGHFPAELNHVTGPALLIPLGKAAETVCETLIRQHSLQNLICLNGFPHPSGANGHRLKQFSKNKEQLERQIRSFAALVDFAIEKRK.

This is an uncharacterized protein from Bacillus subtilis (strain 168).